The following is a 496-amino-acid chain: L-arabinose isomerase (496 aa).

Residues Glu-302, Glu-329, His-346, and His-445 each coordinate Mn(2+).

This sequence belongs to the arabinose isomerase family. Requires Mn(2+) as cofactor.

It carries out the reaction beta-L-arabinopyranose = L-ribulose. Its pathway is carbohydrate degradation; L-arabinose degradation via L-ribulose; D-xylulose 5-phosphate from L-arabinose (bacterial route): step 1/3. In terms of biological role, catalyzes the conversion of L-arabinose to L-ribulose. This Thermotoga petrophila (strain ATCC BAA-488 / DSM 13995 / JCM 10881 / RKU-1) protein is L-arabinose isomerase.